Consider the following 185-residue polypeptide: uncharacterized protein (185 aa).

The signal sequence occupies residues 1 to 18 (MLLKLILILCFLVTLSLS). Positions 30-185 (TQGPTIASGG…VQDCGEITGW (156 aa)) are disordered. Residues 86–101 (RAQEGGKKDTTKEQPK) show a composition bias toward basic and acidic residues. The span at 103 to 116 (NNNNKNLGRHSSSG) shows a compositional bias: low complexity. Over residues 117-135 (SGSGSGSGCGVTGDTGTGS) the composition is skewed to gly residues.

It is found in the secreted. This is an uncharacterized protein from Dictyostelium discoideum (Social amoeba).